The sequence spans 252 residues: uncharacterized protein (252 aa).

The N-terminal stretch at 1 to 22 is a signal peptide; sequence MIHSKRLRLWLYLVLLAVFISA. Residue cysteine 23 is the site of N-palmitoyl cysteine attachment. A lipid anchor (S-diacylglycerol cysteine) is attached at cysteine 23.

Belongs to the staphylococcal tandem lipoprotein family.

The protein resides in the cell membrane. This is an uncharacterized protein from Staphylococcus aureus (strain MW2).